A 111-amino-acid chain; its full sequence is DIVLTQSPASLAVSLGQRATISCKASQSVDYDGDSYMNWYQQKPGQPPKVLIFAASNLESGIPARFSGSGSGTDFTLNIHPVEEEDAATYYCQQSNEDPWTFGSGTKLEIK.

The framework-1 stretch occupies residues 1 to 23 (DIVLTQSPASLAVSLGQRATISC). Cys-23 and Cys-92 are oxidised to a cystine. Residues 24–38 (KASQSVDYDGDSYMN) are complementarity-determining-1. The interval 39-53 (WYQQKPGQPPKVLIF) is framework-2. A complementarity-determining-2 region spans residues 54-60 (AASNLES). The tract at residues 61 to 92 (GIPARFSGSGSGTDFTLNIHPVEEEDAATYYC) is framework-3. Residues 93–101 (QQSNEDPWT) form a complementarity-determining-3 region. Positions 102–111 (FGSGTKLEIK) are framework-4.

This Mus musculus (Mouse) protein is Ig kappa chain V-III region PC 7769.